Here is a 97-residue protein sequence, read N- to C-terminus: Glutamyl-tRNA(Gln) amidotransferase subunit C (97 aa).

The protein belongs to the GatC family. As to quaternary structure, heterotrimer of A, B and C subunits.

The enzyme catalyses L-glutamyl-tRNA(Gln) + L-glutamine + ATP + H2O = L-glutaminyl-tRNA(Gln) + L-glutamate + ADP + phosphate + H(+). It catalyses the reaction L-aspartyl-tRNA(Asn) + L-glutamine + ATP + H2O = L-asparaginyl-tRNA(Asn) + L-glutamate + ADP + phosphate + 2 H(+). Functionally, allows the formation of correctly charged Asn-tRNA(Asn) or Gln-tRNA(Gln) through the transamidation of misacylated Asp-tRNA(Asn) or Glu-tRNA(Gln) in organisms which lack either or both of asparaginyl-tRNA or glutaminyl-tRNA synthetases. The reaction takes place in the presence of glutamine and ATP through an activated phospho-Asp-tRNA(Asn) or phospho-Glu-tRNA(Gln). The sequence is that of Glutamyl-tRNA(Gln) amidotransferase subunit C from Sulfurisphaera tokodaii (strain DSM 16993 / JCM 10545 / NBRC 100140 / 7) (Sulfolobus tokodaii).